The following is a 578-amino-acid chain: Putative diflavin flavoprotein A 2 (578 aa).

Residues 48 to 240 (RHGTTYNSFL…LQVVLVATGH (193 aa)) are zinc metallo-hydrolase. Fe cation is bound by residues His-97, Glu-99, Asp-101, His-164, Asp-183, and His-240. One can recognise a Flavodoxin-like domain in the interval 269 to 406 (VALFYVDGYG…LCREAGTDLG (138 aa)). Positions 429-578 (IGRLSTGLYI…THHRKLGNHY (150 aa)) are flavodoxin-reductase-like.

In the N-terminal section; belongs to the zinc metallo-hydrolase group 3 family. This sequence in the C-terminal section; belongs to the flavodoxin reductase family. Fe cation serves as cofactor.

Mediates electron transfer from NADH to oxygen, reducing it to water. This modular protein has 3 redox cofactors, in other organisms the same activity requires 2 or 3 proteins. This is Putative diflavin flavoprotein A 2 (dfa2) from Synechocystis sp. (strain ATCC 27184 / PCC 6803 / Kazusa).